Consider the following 442-residue polypeptide: Serine--tRNA ligase (442 aa).

L-serine is bound at residue 249-251; that stretch reads TSE. 280-282 contacts ATP; the sequence is RSE. Residue Glu-303 coordinates L-serine. 367–370 is a binding site for ATP; sequence EISS. Ser-402 is an L-serine binding site.

The protein belongs to the class-II aminoacyl-tRNA synthetase family. Type-1 seryl-tRNA synthetase subfamily. In terms of assembly, homodimer. The tRNA molecule binds across the dimer.

The protein resides in the cytoplasm. It catalyses the reaction tRNA(Ser) + L-serine + ATP = L-seryl-tRNA(Ser) + AMP + diphosphate + H(+). The enzyme catalyses tRNA(Sec) + L-serine + ATP = L-seryl-tRNA(Sec) + AMP + diphosphate + H(+). Its pathway is aminoacyl-tRNA biosynthesis; selenocysteinyl-tRNA(Sec) biosynthesis; L-seryl-tRNA(Sec) from L-serine and tRNA(Sec): step 1/1. In terms of biological role, catalyzes the attachment of serine to tRNA(Ser). Is also able to aminoacylate tRNA(Sec) with serine, to form the misacylated tRNA L-seryl-tRNA(Sec), which will be further converted into selenocysteinyl-tRNA(Sec). The chain is Serine--tRNA ligase from Acidovorax ebreus (strain TPSY) (Diaphorobacter sp. (strain TPSY)).